Consider the following 359-residue polypeptide: MVRVCRVVPKDWSKFQPVGNVIPRTRFIVFKTPINSQLSTKIHKEQRFTTNDLFRQLSERGQYLGLVVDLSDTDRYYDKKDITGMCVQYEKVNCPGRGFIERDDCVESFHQVIQDYTDKCDDPDALIGVHCTNGINRCGYLICRFLIDRLGWSSHEAIDAFEQARGYSIEKGAYVMALHKAAKDKRDKQVDSDSDSSERQRKKKNKRKHREIVEHENIVLINTIIGELGSQAASVSGTDYQNSPNGVSVDPGQPQPHHWGFAIKRSKYAQLNQPVANGANTPPEPSEGTPQEEEEFEEDFEEIEEETETEPGKGQSVSSKRRARRNRMQKYMQVMQRGRFHEIQAIREEVALSHGSARD.

Positions 16–191 (QPVGNVIPRT…AKDKRDKQVD (176 aa)) constitute a Tyrosine-protein phosphatase domain. Cys-131 acts as the Phosphocysteine intermediate in catalysis. Residues 184 to 199 (DKRDKQVDSDSDSSER) show a composition bias toward basic and acidic residues. Disordered stretches follow at residues 184 to 211 (DKRDKQVDSDSDSSERQRKKKNKRKHRE), 234 to 259 (SVSGTDYQNSPNGVSVDPGQPQPHHW), and 274 to 328 (PVAN…RNRM). Over residues 200-210 (QRKKKNKRKHR) the composition is skewed to basic residues. Residues 234-246 (SVSGTDYQNSPNG) show a composition bias toward polar residues. The span at 290–309 (PQEEEEFEEDFEEIEEETET) shows a compositional bias: acidic residues. The segment covering 319–328 (SKRRARRNRM) has biased composition (basic residues).

The protein belongs to the protein-tyrosine phosphatase family. Non-receptor class CDC14 subfamily.

The catalysed reaction is O-phospho-L-tyrosyl-[protein] + H2O = L-tyrosyl-[protein] + phosphate. The protein is Probable tyrosine-protein phosphatase pir-2 of Caenorhabditis elegans.